The sequence spans 208 residues: Claudin-like protein ZF-A89 (208 aa).

The next 4 membrane-spanning stretches (helical) occupy residues 8–28 (LLAT…CALP), 82–102 (ALVV…IAGG), 117–137 (VVVA…IPVC), and 160–180 (LGAS…GGAL).

The protein belongs to the claudin family.

It localises to the cell membrane. Its subcellular location is the cell junction. The protein localises to the tight junction. Functionally, component of tight junction (TJ) strands. This Danio rerio (Zebrafish) protein is Claudin-like protein ZF-A89 (cldnd).